Consider the following 557-residue polypeptide: Estrogen receptor beta (557 aa).

Residues 1–154 are modulating; the sequence is MMAAASSPEK…SSGGKADLHY (154 aa). NR C4-type zinc fingers lie at residues 155-175 and 191-215; these read CAVC…CEGC and CPAT…LRKC. Positions 155-220 form a DNA-binding region, nuclear receptor; it reads CAVCHDYASG…RLRKCYEVGM (66 aa). Positions 240–268 are disordered; the sequence is LTRLSSQGKTAEPKGITGPAEGSLNKPEK. Positions 272-508 constitute an NR LBD domain; sequence TPEQLIERIL…DLLLEMLDAH (237 aa). Residues 513 to 557 form a disordered region; the sequence is SCLPHQPPQQDSKDQSEVPAPLHSSAGGPSNTWTPSSARAGGESQ. Residues 539–557 are compositionally biased toward polar residues; that stretch reads GGPSNTWTPSSARAGGESQ.

It belongs to the nuclear hormone receptor family. NR3 subfamily. Binds DNA as a homodimer. Can form a heterodimer with ER-alpha.

The protein localises to the nucleus. Binds estrogens with an affinity similar to that of ER-alpha, and activates expression of reporter genes containing estrogen response elements (ERE) in an estrogen-dependent manner. This Oreochromis niloticus (Nile tilapia) protein is Estrogen receptor beta (esr2).